Here is a 211-residue protein sequence, read N- to C-terminus: Protein GrpE (211 aa).

The segment covering M1–P10 has biased composition (basic and acidic residues). Disordered regions lie at residues M1–V37 and A187–A211. Over residues E27–P36 the composition is skewed to acidic residues. Positions P201–A211 are enriched in polar residues.

It belongs to the GrpE family. In terms of assembly, homodimer.

The protein resides in the cytoplasm. Participates actively in the response to hyperosmotic and heat shock by preventing the aggregation of stress-denatured proteins, in association with DnaK and GrpE. It is the nucleotide exchange factor for DnaK and may function as a thermosensor. Unfolded proteins bind initially to DnaJ; upon interaction with the DnaJ-bound protein, DnaK hydrolyzes its bound ATP, resulting in the formation of a stable complex. GrpE releases ADP from DnaK; ATP binding to DnaK triggers the release of the substrate protein, thus completing the reaction cycle. Several rounds of ATP-dependent interactions between DnaJ, DnaK and GrpE are required for fully efficient folding. The polypeptide is Protein GrpE (Agrobacterium fabrum (strain C58 / ATCC 33970) (Agrobacterium tumefaciens (strain C58))).